The following is a 2290-amino-acid chain: Armadillo repeat-containing X-linked protein 4 (2290 aa).

The chain crosses the membrane as a helical span at residues 7-24 (VGWVTAGLVIWAGTCYYI). Disordered stretches follow at residues 517–549 (QGEA…TCTQ), 564–583 (SRVD…TKAD), 967–988 (KVRG…VGSA), 1014–1087 (AVPK…ACRK), 1302–1430 (GSWA…ANSG), 1521–1715 (GSWG…RSED), 1911–1931 (SNTF…AGDN), and 1954–1973 (NENT…KSSE). A compositionally biased stretch (basic residues) spans 526-536 (GKARGKAKAKC). The span at 1073–1087 (TSESEGGSGTQACRK) shows a compositional bias: polar residues. Gly residues-rich tracts occupy residues 1328–1341 (SWAG…GGSM) and 1403–1414 (AGAGGQAGGGSK). Polar residues predominate over residues 1419–1430 (DQSSGRSWANSG). The segment covering 1521–1535 (GSWGGASGQDVGGSR) has biased composition (gly residues). Residues 1537-1558 (GPTNQSSAGSWDSPGSQVSGSC) are compositionally biased toward polar residues. Composition is skewed to gly residues over residues 1581–1598 (IGGG…GGSR) and 1609–1623 (GSWG…GGAR). Over residues 1628–1645 (DQSSGGSWAGTGNQSSGR) the composition is skewed to polar residues. A compositionally biased stretch (low complexity) spans 1674-1687 (GAGSQASGESWAGS). ARM repeat units lie at residues 2031 to 2071 (RCKH…NSAD), 2073 to 2112 (SYSH…NISV), 2153 to 2192 (ITSE…NFSK), and 2194 to 2234 (PSMT…NINY).

Belongs to the eutherian X-chromosome-specific Armcx family.

The protein localises to the membrane. In Homo sapiens (Human), this protein is Armadillo repeat-containing X-linked protein 4 (ARMCX4).